The primary structure comprises 98 residues: MARSIKKGPFADKHLTKKVEDANKGNKKSVIKTWSRRSTILPDFVGHTFAVHNGRKFVPVFVTENMVGHKLGEFAPTRTFHGHSAEKKAAAAPAPAKK.

2 disordered regions span residues methionine 1–valine 30 and arginine 78–lysine 98. A compositionally biased stretch (basic and acidic residues) spans proline 9–lysine 24.

The protein belongs to the universal ribosomal protein uS19 family.

Protein S19 forms a complex with S13 that binds strongly to the 16S ribosomal RNA. The chain is Small ribosomal subunit protein uS19 from Anaeromyxobacter dehalogenans (strain 2CP-1 / ATCC BAA-258).